Reading from the N-terminus, the 295-residue chain is Methionine aminopeptidase (295 aa).

Substrate is bound at residue H62. A divalent metal cation contacts are provided by D82, D93, and H153. H161 is a binding site for substrate. Positions 187 and 280 each coordinate a divalent metal cation.

Monomer. It depends on Co(2+) as a cofactor. Zn(2+) serves as cofactor. Mn(2+) is required as a cofactor. Requires Fe(2+) as cofactor.

The catalysed reaction is Release of N-terminal amino acids, preferentially methionine, from peptides and arylamides.. Its function is as follows. Removes the N-terminal methionine from nascent proteins. The N-terminal methionine is often cleaved when the second residue in the primary sequence is small and uncharged (Met-Ala-, Cys, Gly, Pro, Ser, Thr, or Val). This is Methionine aminopeptidase from Pyrococcus furiosus (strain ATCC 43587 / DSM 3638 / JCM 8422 / Vc1).